Reading from the N-terminus, the 97-residue chain is UPF0213 protein YE0453 (97 aa).

Residues S4–K79 enclose the GIY-YIG domain.

Belongs to the UPF0213 family.

The sequence is that of UPF0213 protein YE0453 from Yersinia enterocolitica serotype O:8 / biotype 1B (strain NCTC 13174 / 8081).